We begin with the raw amino-acid sequence, 222 residues long: Beta-casein (222 aa).

Residues 1–15 (MKVLILACLVALAIA) form the signal peptide. Threonine 27 carries the phosphothreonine modification. Serine 30, serine 32, serine 33, and serine 34 each carry phosphoserine.

Belongs to the beta-casein family. As to expression, mammary gland specific. Secreted in milk.

It is found in the secreted. Functionally, important role in determination of the surface properties of the casein micelles. The polypeptide is Beta-casein (CSN2) (Capra hircus (Goat)).